Reading from the N-terminus, the 309-residue chain is MNWIKKTLRFGEKIKTIIKARATKTEIANSDWTSCCKGPILKKDLEENLWVCPSCNKHHRISPRQRFDIIFGKNNYEVLKTPIPQDDPLNWNDAKPYKDRLKAARKKTGMDCGMMVVNTNILNLKITAIASDFDFVGGSIGAAEGEAFLYGIQHAIENEQPFVVFTSGGGMRMMESLISLSQMTRTTLAINELKKNNLPYIVVLTDPTAGGITASYAMLGDLHLAEPGALIAFAGARVIQGTVREELPEGFQRSEYVEKTGFVDLIVERKDLREKIGSLLSILLKKNSAINSSENETSEDSRALTKAAS.

The region spanning Asn-29 to Ser-298 is the CoA carboxyltransferase N-terminal domain. Zn(2+)-binding residues include Cys-35, Cys-36, Cys-52, and Cys-55.

Belongs to the AccD/PCCB family. In terms of assembly, acetyl-CoA carboxylase is a heterohexamer composed of biotin carboxyl carrier protein (AccB), biotin carboxylase (AccC) and two subunits each of ACCase subunit alpha (AccA) and ACCase subunit beta (AccD). Requires Zn(2+) as cofactor.

It is found in the cytoplasm. It catalyses the reaction N(6)-carboxybiotinyl-L-lysyl-[protein] + acetyl-CoA = N(6)-biotinyl-L-lysyl-[protein] + malonyl-CoA. Its pathway is lipid metabolism; malonyl-CoA biosynthesis; malonyl-CoA from acetyl-CoA: step 1/1. Functionally, component of the acetyl coenzyme A carboxylase (ACC) complex. Biotin carboxylase (BC) catalyzes the carboxylation of biotin on its carrier protein (BCCP) and then the CO(2) group is transferred by the transcarboxylase to acetyl-CoA to form malonyl-CoA. The protein is Acetyl-coenzyme A carboxylase carboxyl transferase subunit beta of Pelagibacter ubique (strain HTCC1062).